We begin with the raw amino-acid sequence, 413 residues long: Serine hydroxymethyltransferase (413 aa).

(6S)-5,6,7,8-tetrahydrofolate contacts are provided by residues Leu-117 and 121 to 123 (GHL). An N6-(pyridoxal phosphate)lysine modification is found at Lys-226. Residues Glu-239 and 349-351 (SPF) each bind (6S)-5,6,7,8-tetrahydrofolate.

Belongs to the SHMT family. In terms of assembly, homodimer. Requires pyridoxal 5'-phosphate as cofactor.

It localises to the cytoplasm. The enzyme catalyses (6R)-5,10-methylene-5,6,7,8-tetrahydrofolate + glycine + H2O = (6S)-5,6,7,8-tetrahydrofolate + L-serine. It functions in the pathway one-carbon metabolism; tetrahydrofolate interconversion. Its pathway is amino-acid biosynthesis; glycine biosynthesis; glycine from L-serine: step 1/1. Functionally, catalyzes the reversible interconversion of serine and glycine with tetrahydrofolate (THF) serving as the one-carbon carrier. This reaction serves as the major source of one-carbon groups required for the biosynthesis of purines, thymidylate, methionine, and other important biomolecules. Also exhibits THF-independent aldolase activity toward beta-hydroxyamino acids, producing glycine and aldehydes, via a retro-aldol mechanism. This is Serine hydroxymethyltransferase from Bacillus anthracis (strain A0248).